Reading from the N-terminus, the 446-residue chain is MITIKKGLNLPISGSPEQVIRDGNAITEVALLGEEYVGMRPSMKVREGDVVKKGQVLFEDKKNPGVVFTAPASGTVTAIHRGAKRVLQSVVIKIEGNEQITFEKYTTEQLNQLTSEQVRQNLQASGLWTALRTRPFSKVPAVDATPVSIFVNAMDTNPLCADPQVIVQQSAQAFEAGLTVLSRLHEGKVYLCKAANASIPSPSIANLDVKEFAGPHPAGLSGTHIHFIDPVSATKFVWYINYQDVIAVGKLFTTGELDVSRVVSLAGPQVKNPRLVRTVLGANLSQLTANEVKDGENRVISGSVLSGAKAAGPVDYLGRYALQVSVLEEGREKEFLGWIMPGANKYSLSRTVLGHFSKKLFNFTTALNGGERAMVPIGAYERVMPLDIIPTLLLRDLAAGDTDSAQALGCLELDEEDLALCTFVCPGKNEYGPLLRQALDKIEKEG.

This sequence belongs to the NqrA family. In terms of assembly, composed of six subunits; NqrA, NqrB, NqrC, NqrD, NqrE and NqrF.

It catalyses the reaction a ubiquinone + n Na(+)(in) + NADH + H(+) = a ubiquinol + n Na(+)(out) + NAD(+). Its function is as follows. NQR complex catalyzes the reduction of ubiquinone-1 to ubiquinol by two successive reactions, coupled with the transport of Na(+) ions from the cytoplasm to the periplasm. NqrA to NqrE are probably involved in the second step, the conversion of ubisemiquinone to ubiquinol. The chain is Na(+)-translocating NADH-quinone reductase subunit A from Pasteurella multocida (strain Pm70).